Here is a 520-residue protein sequence, read N- to C-terminus: MAAAEPDADPKAAIPVDLRRERRLVCVEYPGVVRNEAKMLQTLGGEESVSRIYTDPTKRLELYFRPKDPYCHPVCANRFSTSSLLLRIRKRTRRRRGVLGDEAHPQVTFNLEIIGIISTIYKFQGMSDFQYLAVHTEAGGKHVSMYDRVLMRKPEKEEFFHQELPLYIPPPIFSRLDTPVDYFYRPETQHREGYHNPTISGENLIGLSRARRPHNAIFVNFEDTEVPEQPLEAAVQTWKKACTNPIDQKVEEELRKLFDIRPVWSRNAVKSNVSVHPDKLKILLPYMAYYMITGPWRSLWIRFGYDPRKHPDAKIYQVLDFRIRCGMKYGYGSRDMPVKAKRSTYNYSLPITVKKTSNQPGTMHDLKQGLGPSGTDGPRKLTYNKYKLKDSVYIFREGALPPYRQMFYQLCDLNVEELQKIVHRNDGTETVCTERDGWCLPKTTDHLRDTMSLMILQTIRSERPALFSNTGKADRGKEQLMFESGEEEEEEEEEEEEEEEDFKPSDGSENEMETEILDYV.

Residue alanine 2 is modified to N-acetylalanine. The tract at residues 466–520 is disordered; the sequence is LFSNTGKADRGKEQLMFESGEEEEEEEEEEEEEEEDFKPSDGSENEMETEILDYV. 2 stretches are compositionally biased toward acidic residues: residues 484-501 and 508-520; these read SGEE…EEED and SENE…LDYV.

The protein belongs to the TFIIIC subunit 5 family. In terms of assembly, part of the TFIIIC subcomplex TFIIIC2, consisting of six subunits, GTF3C1, GTF3C2, GTF3C3, GTF3C4, GTF3C5 and GTF3C6. Interacts with BRF1, GTF3C6 and TBP.

It is found in the nucleus. Its function is as follows. Involved in RNA polymerase III-mediated transcription. Integral, tightly associated component of the DNA-binding TFIIIC2 subcomplex that directly binds tRNA and virus-associated RNA promoters. The sequence is that of General transcription factor 3C polypeptide 5 (Gtf3c5) from Mus musculus (Mouse).